A 710-amino-acid chain; its full sequence is Low-temperature-induced 78 kDa protein (710 aa).

Disordered stretches follow at residues 1–198 (MDQT…LDGQ), 225–269 (YQSK…RDLS), and 305–507 (GFGD…STYT). A compositionally biased stretch (basic and acidic residues) spans 14–25 (QHPEEVEHHENG). Residues 29-41 (MFRKVKARAKKFK) show a composition bias toward basic residues. The span at 49-58 (QSNEHEQDHD) shows a compositional bias: basic and acidic residues. Residues 59-73 (LVEEDDDDDELEPEV) are compositionally biased toward acidic residues. The span at 138 to 168 (SDKEEKRDVPIHHPLSELSDREESRETHHES) shows a compositional bias: basic and acidic residues. Residues 169–187 (LNTPVSLLSGTEDVTSTFA) are compositionally biased toward polar residues. 5 consecutive repeat copies span residues 303–316 (PVGF…ELEK), 317–331 (DFPT…KTET), 336–350 (NSPS…KTES), 357–370 (PMGF…ELEK), and 398–412 (NFPV…KNES). The interval 303-370 (PVGFGDESGA…GSESGAELEK (68 aa)) is 2 X 14 AA repeats of P-[MV]-G-F-G-[DS]-E-S-G-A-E-L-E-K. Basic and acidic residues-rich tracts occupy residues 313 to 331 (ELEK…KTET), 340 to 352 (RSHE…ESGN), 367 to 380 (ELEK…DSGR), 402 to 418 (RSHE…DKDV), 442 to 466 (EDKF…KTET), and 475 to 487 (SHPK…KESR). A 3 X 15 AA repeats of [DN]-[FS]-P-[STV]-R-S-H-[DE]-[FL]-D-[LM]-K-[NT]-E-[ST] region spans residues 317 to 412 (DFPTRSHDFD…SHELDLKNES (96 aa)). 3 repeat units span residues 510-514 (FASML), 532-536 (VDEKL), and 550-554 (VTTKL). Positions 510-600 (FASMLGYSGE…AFSDMVAEKL (91 aa)) are 5 X 5 AA repeats of [FV]-[ADT]-[EST]-[KM]-L. Positions 537–577 (TPVNEKDQETESAVTTKLPISGGGSGVEEQRGEDKSVSGRD) are disordered. Residues 564 to 577 (EEQRGEDKSVSGRD) show a composition bias toward basic and acidic residues. 2 tandem repeats follow at residues 579–583 (VAEKL) and 596–600 (VAEKL). A disordered region spans residues 601-710 (QIGGEEEKKE…STVVPVQKEL (110 aa)). Basic and acidic residues predominate over residues 605 to 626 (EEEKKETTTKEVEKISTEKAAS). At Ser-626 the chain carries Phosphoserine. The segment covering 638–654 (GGGGMVGRIKGWFGGGA) has biased composition (gly residues). 2 repeat units span residues 648-670 (GWFG…EEAP) and 674-696 (GWFG…EESP). A 2 X 23 AA repeats region spans residues 648 to 696 (GWFGGGATDEVKPESPHSVEEAPKSSGWFGGGATEEVKPKSPHSVEESP). 2 stretches are compositionally biased toward basic and acidic residues: residues 656–670 (DEVK…EEAP) and 682–693 (EEVKPKSPHSVE).

This sequence belongs to the LTI78/LTI65 family. Accumulates rapidly in leaves, stems, roots, flower petals, filaments, and sepals during cold-acclimation.

The protein resides in the cytoplasm. Involved in responses to abiotic stresses. Regulates probably root elongation in cold conditions. The chain is Low-temperature-induced 78 kDa protein from Arabidopsis thaliana (Mouse-ear cress).